Reading from the N-terminus, the 592-residue chain is MWWRHAPWVLIVVVDVMYCSSEEENAVSFELDPDNETIIFPFAFGGDNIIMLPTMKYSDYKRSTRYMKDPEFLLYSLSSVVWDLVVGHVSYKNDDRFDKLFDKMMSKYLNNVSINASRIYIRGNKTFSEMLEMVYERIFECDSKGSRQMARYGESLIREIDSKMESMPSEMSEEEKEKMRSDLNDDKKYVESFRDTEKWRQIVEAEKMVCNACKEICLGLKEEELMGLFAEGSMRKALKAKLGEEKASHRGYLECAFVDIKLLLDAHKEHGGDVTKELVMQMLLGKKGKNIDKRYINKVANVVKERQRRREREIEKNMKELMRDEEKAKSKEKAKSKEKAKSKKKGESVGVSEAKEEEKKESETEEVEASEEVGIPSVEVGGARRKTGKKSEGGRKRYKIHRRVSRWRKSPEKIKDEWDKGSEEKWKGRSLEEIKEQKVFHDIMGVLELLRSEDADKFFMDTGKYTKGGSERQRMVAIGVLESGGKRMAGVVEVGTFKDSSSGCPVVYHLMFRVTGIEGMGDVMSPEFAEANDIEKIDKNREYQDEGMFVYPKGVTFETVKETGSFQIVWENPSDTSEVLRRLTIQRRPCVI.

Basic and acidic residues-rich tracts occupy residues 306 to 339 (RQRR…SKEK) and 353 to 362 (EAKEEEKKES). Residues 306–404 (RQRRREREIE…RKRYKIHRRV (99 aa)) are disordered.

Belongs to the UPF0329 family.

The chain is UPF0329 protein ECU01_0110/ECU01_1500/ECU08_0040 from Encephalitozoon cuniculi (strain GB-M1) (Microsporidian parasite).